The chain runs to 57 residues: Large ribosomal subunit protein eL20 (57 aa).

This sequence belongs to the eukaryotic ribosomal protein eL20 family. As to quaternary structure, part of the 50S ribosomal subunit. Binds 23S rRNA.

This Halorhabdus utahensis (strain DSM 12940 / JCM 11049 / AX-2) protein is Large ribosomal subunit protein eL20.